A 339-amino-acid polypeptide reads, in one-letter code: Mycothiol acetyltransferase (339 aa).

N-acetyltransferase domains are found at residues 8–174 (YEQL…QGLT) and 176–339 (LTYP…GELN). E39 serves as a coordination point for 1D-myo-inositol 2-(L-cysteinylamino)-2-deoxy-alpha-D-glucopyranoside. 85–87 (LAV) lines the acetyl-CoA pocket. Positions 207, 254, and 270 each coordinate 1D-myo-inositol 2-(L-cysteinylamino)-2-deoxy-alpha-D-glucopyranoside. An acetyl-CoA-binding site is contributed by 274-276 (VCL). Position 308 (Y308) interacts with 1D-myo-inositol 2-(L-cysteinylamino)-2-deoxy-alpha-D-glucopyranoside.

It belongs to the acetyltransferase family. MshD subfamily. As to quaternary structure, monomer.

The catalysed reaction is 1D-myo-inositol 2-(L-cysteinylamino)-2-deoxy-alpha-D-glucopyranoside + acetyl-CoA = mycothiol + CoA + H(+). Its function is as follows. Catalyzes the transfer of acetyl from acetyl-CoA to desacetylmycothiol (Cys-GlcN-Ins) to form mycothiol. The protein is Mycothiol acetyltransferase of Corynebacterium urealyticum (strain ATCC 43042 / DSM 7109).